We begin with the raw amino-acid sequence, 438 residues long: Probable chaperone protein ClpB 1 (438 aa).

A coiled-coil region spans residues 1-94; it reads MNTADTRQRL…NNRKIEARQA (94 aa). Residues 1–118 form a linker region; it reads MNTADTRQRL…IADIVSRWTG (118 aa). The NBD2 stretch occupies residues 128–345; that stretch reads ERQKLLGIES…RIDEVILFTP (218 aa). Position 178–185 (178–185) interacts with ATP; it reads GPTGVGKT. The C-terminal stretch occupies residues 346-438; it reads LTRENLREIV…ENDAIVMKKK (93 aa).

The protein belongs to the ClpA/ClpB family. In terms of assembly, homohexamer. The oligomerization is ATP-dependent.

It localises to the cytoplasm. In terms of biological role, part of a stress-induced multi-chaperone system, it is involved in the recovery of the cell from heat-induced damage, in cooperation with DnaK, DnaJ and GrpE. Acts before DnaK, in the processing of protein aggregates. Protein binding stimulates the ATPase activity; ATP hydrolysis unfolds the denatured protein aggregates, which probably helps expose new hydrophobic binding sites on the surface of ClpB-bound aggregates, contributing to the solubilization and refolding of denatured protein aggregates by DnaK. This chain is Probable chaperone protein ClpB 1 (clpB1), found in Chlorobaculum tepidum (strain ATCC 49652 / DSM 12025 / NBRC 103806 / TLS) (Chlorobium tepidum).